The primary structure comprises 414 residues: Serine/threonine transporter SstT (414 aa).

Topologically, residues 2 to 15 are cytoplasmic; that stretch reads TTQRSPGLFRRLAH. The helical transmembrane segment at 16 to 36 threads the bilayer; that stretch reads GSLVKQILVGLVLGILLAWIS. The Periplasmic portion of the chain corresponds to 37–45; it reads KPAAEAVGL. The chain crosses the membrane as a helical span at residues 46-66; the sequence is LGTLFVGALKAVAPILVLMLV. The Cytoplasmic portion of the chain corresponds to 67–83; that stretch reads MASIANHQHGQKTNIRP. A helical transmembrane segment spans residues 84–104; it reads ILFLYLLGTFSAALAAVVFSF. Residues 105 to 142 lie on the Periplasmic side of the membrane; it reads AFPSTLHLSSSAGDISPPSGIVEVMRGLVMSMVSNPID. The chain crosses the membrane as a helical span at residues 143-163; the sequence is ALLKGNYIGILVWAIGLGFAL. Over 164–179 the chain is Cytoplasmic; it reads RHGNETTKNLVNDMSN. A helical transmembrane segment spans residues 180 to 200; the sequence is AVTFMVKLVIRFAPFGIFGLV. Over 201–217 the chain is Periplasmic; the sequence is SSTLATTGFSTLWGYAQ. A helical transmembrane segment spans residues 218-238; that stretch reads LLVVLVGCMLLVALVVNPLLV. Residues 239–299 lie on the Cytoplasmic side of the membrane; the sequence is WWKIRRNPFP…VSIPLGATIN (61 aa). Residues 300–320 traverse the membrane as a helical segment; the sequence is MAGAAITITVLTLAAVNTLGI. The Periplasmic portion of the chain corresponds to 321 to 331; that stretch reads PVDLPTALLLS. A helical transmembrane segment spans residues 332–352; sequence VVASLCACGASGVAGGSLLLI. The Cytoplasmic portion of the chain corresponds to 353-414; the sequence is PLACNMFGIS…DRLANSALRN (62 aa).

It belongs to the dicarboxylate/amino acid:cation symporter (DAACS) (TC 2.A.23) family.

Its subcellular location is the cell inner membrane. It carries out the reaction L-serine(in) + Na(+)(in) = L-serine(out) + Na(+)(out). It catalyses the reaction L-threonine(in) + Na(+)(in) = L-threonine(out) + Na(+)(out). Its function is as follows. Involved in the import of serine and threonine into the cell, with the concomitant import of sodium (symport system). This is Serine/threonine transporter SstT from Shigella flexneri.